The sequence spans 229 residues: MSVSLSRLERQLGYTFKDQELMILALTHRSFAGRNNERLEFLGDAILNFVAGEALFERFPQAREGQLSRLRARLVKGETLALLARGFDLGEYLRLGSGELKSGGFRRESILADALEALIGAIYLDAGMEAARERVLAWLTTEFDSLTLVDTNKDPKTRLQEFLQSRACDLPRYEVVDIQGEPHCRTFFVECEINLLNEKSRGQGVSRRIAEQVAAAAALIALGVENGHE.

The RNase III domain occupies 5–127 (LSRLERQLGY…LIGAIYLDAG (123 aa)). Glu40 provides a ligand contact to Mg(2+). Asp44 is a catalytic residue. Asp113 and Glu116 together coordinate Mg(2+). The active site involves Glu116. A DRBM domain is found at 154–224 (DPKTRLQEFL…AAAALIALGV (71 aa)).

The protein belongs to the ribonuclease III family. In terms of assembly, homodimer. The cofactor is Mg(2+).

Its subcellular location is the cytoplasm. It catalyses the reaction Endonucleolytic cleavage to 5'-phosphomonoester.. In terms of biological role, digests double-stranded RNA. Involved in the processing of primary rRNA transcript to yield the immediate precursors to the large and small rRNAs (23S and 16S). Processes some mRNAs, and tRNAs when they are encoded in the rRNA operon. Processes pre-crRNA and tracrRNA of type II CRISPR loci if present in the organism. This is Ribonuclease 3 from Pseudomonas syringae pv. tomato (strain ATCC BAA-871 / DC3000).